Here is a 216-residue protein sequence, read N- to C-terminus: UPF0323 lipoprotein HPG27_212 (216 aa).

The signal sequence occupies residues 1–27 (MKKPYRKISDYAIVGGLSALVMVSIVG). Cysteine 28 carries N-palmitoyl cysteine lipidation. Residue cysteine 28 is the site of S-diacylglycerol cysteine attachment. The span at 159 to 170 (QRTYKSPQAYQR) shows a compositional bias: polar residues. Residues 159–216 (QRTYKSPQAYQRSQNSFSKSAPSASSMGGASKGQSGFFGSSRPTSSPAVSSGTRGFNS) are disordered. Residues 171–209 (SQNSFSKSAPSASSMGGASKGQSGFFGSSRPTSSPAVSS) are compositionally biased toward low complexity.

Belongs to the UPF0323 family.

The protein resides in the cell membrane. This is UPF0323 lipoprotein HPG27_212 from Helicobacter pylori (strain G27).